The sequence spans 242 residues: RxLR effector protein PexRD15 (242 aa).

The N-terminal stretch at 1-24 is a signal peptide; the sequence is MMKSLYAVNLVLLLLLAFFAPAPA. The RxLR-dEER motif lies at 48–66; that stretch reads RLLRAHSSDKEEQKEEEER.

Belongs to the RxLR effector family.

The protein localises to the secreted. It localises to the host cell membrane. Functionally, effector that enhances P.infestans colonization of Nicotiana benthamiana leaves. The protein is RxLR effector protein PexRD15 of Phytophthora infestans (strain T30-4) (Potato late blight agent).